A 342-amino-acid polypeptide reads, in one-letter code: Prenyl transferase penC (342 aa).

The helical transmembrane segment at 17 to 37 (LSYLTLTVGALALVVVLYISI) threads the bilayer. Residue histidine 110 participates in isopentenyl diphosphate binding. Residues aspartate 117 and aspartate 121 each contribute to the Mg(2+) site. Position 126 (arginine 126) interacts with dimethylallyl diphosphate. N-linked (GlcNAc...) asparagine glycosylation is present at asparagine 154. A dimethylallyl diphosphate-binding site is contributed by lysine 210.

It belongs to the FPP/GGPP synthase family.

The protein resides in the membrane. The protein operates within secondary metabolite biosynthesis. Prenyl transferase; part of the gene cluster that mediates the biosynthesis of the indole diterpenes penitrems. The geranylgeranyl diphosphate (GGPP) synthase penG catalyzes the first step in penitrem biosynthesis via conversion of farnesyl pyrophosphate and isopentyl pyrophosphate into geranylgeranyl pyrophosphate (GGPP). Condensation of indole-3-glycerol phosphate with GGPP by the prenyl transferase penC then forms 3-geranylgeranylindole (3-GGI). Epoxidation by the FAD-dependent monooxygenase penM leads to a epoxidized-GGI that is substrate of the terpene cyclase penB for cyclization to yield paspaline. Paspaline is subsequently converted to 13-desoxypaxilline by the cytochrome P450 monooxygenase penP, the latter being then converted to paxilline by the cytochrome P450 monooxygenase penQ. Paxilline is converted to beta-paxitriol via C-10 ketoreduction by the short-chain dehydrogenase PC-15 which can be monoprenylated at the C-20 by the indole diterpene prenyltransferase penD. A two-step elimination (acetylation and elimination) process performed by the O-acetyltransferase PC-16 and the P.simplicissimum ptmI-ortholog not yet identified in P.crustosum, leads to the production of the prenylated form of penijanthine. The FAD-linked oxidoreductase ptmO then converts the prenylated form of penijanthine into PC-M5 which is in turn transformed into PC-M4 by the aromatic dimethylallyltransferase PC-22. A series of oxidation steps involving 4 cytochrome P450 monooxygenases (PC-21, PC-05, PC-23, PC-20) and a FAD-dependent monooxygenase (PC-14) are required for the transformation of PC-M4 to penitrems A and E. Synthesis of these final products is proposed to proceed via penitrems D and C (PC-21, PC-05, PC-14) and penitrems B and F (PC-21, PC-05, PC-14, PC-23). This chain is Prenyl transferase penC, found in Penicillium crustosum (Blue mold fungus).